The primary structure comprises 68 residues: Cx9C motif-containing protein 4 (68 aa).

The CHCH domain maps to 4–46; it reads KDPCQKQACEIQKCLQANSYMESKCQAVIQELRKCCAQYPKGR. 2 consecutive short sequence motifs (cx9C motif) follow at residues 7-17 and 28-38; these read CQKQACEIQKC and CQAVIQELRKC. 3 disulfide bridges follow: cysteine 7-cysteine 38, cysteine 17-cysteine 28, and cysteine 39-cysteine 50.

It belongs to the CMC4 family. In terms of tissue distribution, expressed in many tissues with a relatively high level in skeletal muscle.

The protein localises to the mitochondrion. In Homo sapiens (Human), this protein is Cx9C motif-containing protein 4 (CMC4).